The chain runs to 216 residues: Histone doublet H4-H3 (216 aa).

Residues 1–12 (MSKAGKKVKAQQ) show a composition bias toward basic residues. The disordered stretch occupies residues 1 to 23 (MSKAGKKVKAQQHGHLADHVSVG).

The protein localises to the host nucleus. It is found in the host cytoplasm. Its subcellular location is the virion. Its function is as follows. Histone-like protein that is recruited to viral factories during viral replication and participates in viral DNA packaging and virion production probably by forming unstable nucleosome-like particles. May compact the viral DNA. The chain is Histone doublet H4-H3 from Melbournevirus (MelV).